The chain runs to 136 residues: Small ribosomal subunit protein eS6 (136 aa).

The protein belongs to the eukaryotic ribosomal protein eS6 family.

The polypeptide is Small ribosomal subunit protein eS6 (Methanosarcina mazei (strain ATCC BAA-159 / DSM 3647 / Goe1 / Go1 / JCM 11833 / OCM 88) (Methanosarcina frisia)).